The primary structure comprises 123 residues: Large ribosomal subunit protein uL14 (123 aa).

The protein belongs to the universal ribosomal protein uL14 family. Part of the 50S ribosomal subunit. Forms a cluster with proteins L3 and L19. In the 70S ribosome, L14 and L19 interact and together make contacts with the 16S rRNA in bridges B5 and B8.

Binds to 23S rRNA. Forms part of two intersubunit bridges in the 70S ribosome. This is Large ribosomal subunit protein uL14 from Corynebacterium jeikeium (strain K411).